The following is a 264-amino-acid chain: Methionine aminopeptidase (264 aa).

H79 provides a ligand contact to substrate. Residues D97, D108, and H171 each contribute to the a divalent metal cation site. H178 lines the substrate pocket. Residues E204 and E235 each coordinate a divalent metal cation.

The protein belongs to the peptidase M24A family. Methionine aminopeptidase type 1 subfamily. As to quaternary structure, monomer. The cofactor is Co(2+). Zn(2+) is required as a cofactor. It depends on Mn(2+) as a cofactor. Requires Fe(2+) as cofactor.

The enzyme catalyses Release of N-terminal amino acids, preferentially methionine, from peptides and arylamides.. Its function is as follows. Removes the N-terminal methionine from nascent proteins. The N-terminal methionine is often cleaved when the second residue in the primary sequence is small and uncharged (Met-Ala-, Cys, Gly, Pro, Ser, Thr, or Val). Requires deformylation of the N(alpha)-formylated initiator methionine before it can be hydrolyzed. The protein is Methionine aminopeptidase of Salmonella typhi.